We begin with the raw amino-acid sequence, 181 residues long: Histone H1 (181 aa).

Disordered regions lie at residues 1-23 (MTETTSAKPKKVSKPKAKPTHPP) and 81-181 (TKGA…PKKK). The span at 8-19 (KPKKVSKPKAKP) shows a compositional bias: basic residues. The H15 domain maps to 20–94 (THPPTSVMVM…GASGSFKLAA (75 aa)). Composition is skewed to basic residues over residues 103–119 (AVAKPKKAKTPKKKAAA) and 145–181 (KPKKAKTPKKKAAPAKKTPVKKVKKTSPKKKAAPKKK).

It belongs to the histone H1/H5 family.

The protein localises to the nucleus. It localises to the chromosome. Its function is as follows. Histones H1 are necessary for the condensation of nucleosome chains into higher-order structures. The polypeptide is Histone H1 (Tigriopus californicus (Marine copepod)).